A 485-amino-acid polypeptide reads, in one-letter code: Glutamyl-tRNA(Gln) amidotransferase subunit A (485 aa).

Active-site charge relay system residues include K78 and S153. S177 (acyl-ester intermediate) is an active-site residue.

It belongs to the amidase family. GatA subfamily. As to quaternary structure, heterotrimer of A, B and C subunits.

It catalyses the reaction L-glutamyl-tRNA(Gln) + L-glutamine + ATP + H2O = L-glutaminyl-tRNA(Gln) + L-glutamate + ADP + phosphate + H(+). In terms of biological role, allows the formation of correctly charged Gln-tRNA(Gln) through the transamidation of misacylated Glu-tRNA(Gln) in organisms which lack glutaminyl-tRNA synthetase. The reaction takes place in the presence of glutamine and ATP through an activated gamma-phospho-Glu-tRNA(Gln). The polypeptide is Glutamyl-tRNA(Gln) amidotransferase subunit A (Bacillus cereus (strain ZK / E33L)).